The chain runs to 434 residues: Serine hydroxymethyltransferase (434 aa).

(6S)-5,6,7,8-tetrahydrofolate contacts are provided by residues Leu133 and 137 to 139 (GHL). N6-(pyridoxal phosphate)lysine is present on Lys242.

It belongs to the SHMT family. Homodimer. Pyridoxal 5'-phosphate is required as a cofactor.

The protein localises to the cytoplasm. It carries out the reaction (6R)-5,10-methylene-5,6,7,8-tetrahydrofolate + glycine + H2O = (6S)-5,6,7,8-tetrahydrofolate + L-serine. It functions in the pathway one-carbon metabolism; tetrahydrofolate interconversion. Its pathway is amino-acid biosynthesis; glycine biosynthesis; glycine from L-serine: step 1/1. Functionally, catalyzes the reversible interconversion of serine and glycine with tetrahydrofolate (THF) serving as the one-carbon carrier. This reaction serves as the major source of one-carbon groups required for the biosynthesis of purines, thymidylate, methionine, and other important biomolecules. Also exhibits THF-independent aldolase activity toward beta-hydroxyamino acids, producing glycine and aldehydes, via a retro-aldol mechanism. This Bradyrhizobium sp. (strain BTAi1 / ATCC BAA-1182) protein is Serine hydroxymethyltransferase.